A 344-amino-acid chain; its full sequence is AA9 family lytic polysaccharide monooxygenase D (344 aa).

An N-terminal signal peptide occupies residues 1–23 (MKTATSYAAFLLSALAALPHASA). His-24 is a Cu(2+) binding site. An intrachain disulfide couples Cys-70 to Cys-193. O2 is bound at residue His-179. Tyr-190 is a binding site for Cu(2+). N-linked (GlcNAc...) asparagine glycosylation is found at Asn-201 and Asn-207. The interval 240–321 (PPLSNLVSGD…PTTSGNLSAN (82 aa)) is disordered. The segment covering 259-292 (STSSATLSGGAAPTGTASGSTPAGTSQPSSTTGT) has biased composition (low complexity). Positions 311–320 (APTTSGNLSA) are enriched in polar residues. N-linked (GlcNAc...) asparagine glycosylation occurs at Asn-317.

It belongs to the polysaccharide monooxygenase AA9 family. It depends on Cu(2+) as a cofactor.

It is found in the secreted. The enzyme catalyses [(1-&gt;4)-beta-D-glucosyl]n+m + reduced acceptor + O2 = 4-dehydro-beta-D-glucosyl-[(1-&gt;4)-beta-D-glucosyl]n-1 + [(1-&gt;4)-beta-D-glucosyl]m + acceptor + H2O.. Functionally, lytic polysaccharide monooxygenase (LPMO) that depolymerizes crystalline and amorphous polysaccharides via the oxidation of scissile alpha- or beta-(1-4)-glycosidic bonds, yielding C1 or C4 oxidation products. Catalysis by LPMOs requires the reduction of the active-site copper from Cu(II) to Cu(I) by a reducing agent and H(2)O(2) or O(2) as a cosubstrate. This chain is AA9 family lytic polysaccharide monooxygenase D, found in Gloeophyllum trabeum (strain ATCC 11539 / FP-39264 / Madison 617) (Brown rot fungus).